A 371-amino-acid chain; its full sequence is 2-aminoethylphosphonate--pyruvate transaminase (371 aa).

An N6-(pyridoxal phosphate)lysine modification is found at lysine 198.

This sequence belongs to the class-V pyridoxal-phosphate-dependent aminotransferase family. PhnW subfamily. As to quaternary structure, homodimer. It depends on pyridoxal 5'-phosphate as a cofactor.

The catalysed reaction is (2-aminoethyl)phosphonate + pyruvate = phosphonoacetaldehyde + L-alanine. Involved in phosphonate degradation. This chain is 2-aminoethylphosphonate--pyruvate transaminase, found in Syntrophobacter fumaroxidans (strain DSM 10017 / MPOB).